Consider the following 148-residue polypeptide: Low molecular weight protein-tyrosine-phosphatase Etp (148 aa).

Cys13 serves as the catalytic Nucleophile. Arg19 is a catalytic residue. Asp119 serves as the catalytic Proton donor.

This sequence belongs to the low molecular weight phosphotyrosine protein phosphatase family.

It catalyses the reaction O-phospho-L-tyrosyl-[protein] + H2O = L-tyrosyl-[protein] + phosphate. Dephosphorylates etk. In Escherichia coli O157:H7, this protein is Low molecular weight protein-tyrosine-phosphatase Etp (etp).